The sequence spans 197 residues: Imidazoleglycerol-phosphate dehydratase (197 aa).

This sequence belongs to the imidazoleglycerol-phosphate dehydratase family.

The protein localises to the cytoplasm. The catalysed reaction is D-erythro-1-(imidazol-4-yl)glycerol 3-phosphate = 3-(imidazol-4-yl)-2-oxopropyl phosphate + H2O. It participates in amino-acid biosynthesis; L-histidine biosynthesis; L-histidine from 5-phospho-alpha-D-ribose 1-diphosphate: step 6/9. The polypeptide is Imidazoleglycerol-phosphate dehydratase (Hahella chejuensis (strain KCTC 2396)).